A 432-amino-acid chain; its full sequence is Ornithine decarboxylase 1A, chloroplastic (432 aa).

At lysine 95 the chain carries N6-(pyridoxal phosphate)lysine. Pyridoxal 5'-phosphate contacts are provided by residues serine 227, glycine 265, and 298–301 (EPGR). 341-342 (YD) provides a ligand contact to substrate. Catalysis depends on cysteine 377, which acts as the Proton donor; shared with dimeric partner. Aspartate 378 serves as a coordination point for substrate. Residue tyrosine 406 coordinates pyridoxal 5'-phosphate.

It belongs to the Orn/Lys/Arg decarboxylase class-II family. In terms of assembly, homodimer. Only the dimer is catalytically active, as the active sites are constructed of residues from both monomers. Pyridoxal 5'-phosphate is required as a cofactor.

Its subcellular location is the plastid. The protein resides in the chloroplast. The enzyme catalyses L-ornithine + H(+) = putrescine + CO2. Its pathway is alkaloid biosynthesis; nicotine biosynthesis. It functions in the pathway amine and polyamine biosynthesis; putrescine biosynthesis via L-ornithine pathway; putrescine from L-ornithine: step 1/1. Functionally, involved in the biosynthesis of pyridine alkaloid natural products, leading mainly to the production of anabasine, anatabine, nicotine and nornicotine, effective deterrents against herbivores with antiparasitic and pesticide properties (neurotoxins); nornicotine serves as the precursor in the synthesis of the carcinogen compound N'-nitrosonornicotine (NNN). Catalyzes the first and rate-limiting step of polyamine biosynthesis that converts ornithine into putrescine, which is the precursor for the polyamines, spermidine and spermine. Polyamines are essential for cell proliferation and are implicated in cellular processes, ranging from DNA replication to apoptosis. This is Ornithine decarboxylase 1A, chloroplastic from Nicotiana tabacum (Common tobacco).